A 1497-amino-acid chain; its full sequence is Collagen alpha-2(V) chain (1497 aa).

The N-terminal stretch at 1-26 (MMANWVGARPLLILSVLLGYCVSIKA) is a signal peptide. The 59-residue stretch at 38–96 (IACTQHGQMYLNRDIWKPSPCQICVCDNGAILCDKIECPEVLNCANPITPTGECCPVCP) folds into the VWFC domain. Residues 103 to 1265 (TSFGRGRKGQ…PDDTNKTDPG (1163 aa)) form a disordered region. The short motif at 141–143 (RGD) is the Cell attachment site element. Residues 155-164 (PQGIDGEPGV) show a composition bias toward low complexity. Over residues 168–180 (PGAPGPPGHPSHP) the composition is skewed to pro residues. The span at 210–225 (PGSVGPVGPRGPQGLQ) shows a compositional bias: low complexity. Positions 234–246 (AGPPGEPGEPGPM) are enriched in pro residues. A 4-hydroxyproline mark is found at Pro-288, Pro-291, and Pro-294. Composition is skewed to low complexity over residues 320 to 338 (EAGPTGPMGAMGPLGPRGM) and 425 to 441 (TPGAKGPTGSAGTSGPP). Residues 504-506 (RGD) carry the Cell attachment site motif. The span at 550–559 (GPKGGQGDPG) shows a compositional bias: gly residues. Positions 602 to 611 (SIGIRGQPGS) are enriched in low complexity. 4-hydroxyproline occurs at positions 609 and 615. Basic and acidic residues predominate over residues 708 to 719 (RGERGNPGERGE). Gly residues predominate over residues 730-739 (GMAGGHGPDG). Low complexity predominate over residues 744 to 756 (PGPTGTIGDTGPP). Residues 774 to 785 (KGDRGGIGEKGA) show a composition bias toward basic and acidic residues. 2 stretches are compositionally biased toward low complexity: residues 824–839 (PPGSRGNPGSRGENGP) and 878–891 (LAGSPGPHGPHGVP). Over residues 892 to 901 (GLKGGRGTQG) the composition is skewed to gly residues. The span at 917-927 (PPGPAGAPGPA) shows a compositional bias: pro residues. 3 short sequence motifs (cell attachment site) span residues 942–944 (RGD), 1065–1067 (RGD), and 1068–1070 (RGD). The segment covering 1061-1070 (AVGERGDRGD) has biased composition (basic and acidic residues). The segment covering 1091 to 1112 (APGDAGQRGEPGSRGPVGPPGR) has biased composition (low complexity). 2 consecutive short sequence motifs (cell attachment site) follow at residues 1125–1127 (RGD) and 1134–1136 (RGD). Over residues 1125-1139 (RGDKGDNGDRGDRGQ) the composition is skewed to basic and acidic residues. Pro residues-rich tracts occupy residues 1169–1179 (PFGPRGPPGPV) and 1209–1224 (EGPPGEPGPPGPPGPP). The propeptide at 1228 to 1497 (TAALGDIMGH…GLDIGPVCFM (270 aa)) is C-terminal propeptide. N-linked (GlcNAc...) asparagine glycosylation occurs at Asn-1260. Positions 1264 to 1497 (PGIHVTLKSL…GLDIGPVCFM (234 aa)) constitute a Fibrillar collagen NC1 domain. 3 cysteine pairs are disulfide-bonded: Cys-1294–Cys-1326, Cys-1334–Cys-1495, and Cys-1403–Cys-1448. 4 residues coordinate Ca(2+): Asp-1312, Asn-1314, Gln-1315, and Asp-1320. N-linked (GlcNAc...) asparagine glycosylation occurs at Asn-1398.

Belongs to the fibrillar collagen family. Trimers of two alpha 1(V) and one alpha 2(V) chains expressed in most tissues and trimers of one alpha 1(V), one alpha 2(V), and one alpha 3(V) chains with a more limited distribution of expression. In terms of processing, prolines at the third position of the tripeptide repeating unit (G-X-P) are hydroxylated in some or all of the chains. Probably 3-hydroxylated on prolines by LEPREL1. Hydroxylation on proline residues within the sequence motif, GXPG, is most likely to be 4-hydroxy as this fits the requirement for 4-hydroxylation in vertebrates.

The protein resides in the secreted. Its subcellular location is the extracellular space. The protein localises to the extracellular matrix. In terms of biological role, type V collagen is a member of group I collagen (fibrillar forming collagen). It is a minor connective tissue component of nearly ubiquitous distribution. Type V collagen binds to DNA, heparan sulfate, thrombospondin, heparin, and insulin. Type V collagen is a key determinant in the assembly of tissue-specific matrices. This chain is Collagen alpha-2(V) chain, found in Mus musculus (Mouse).